We begin with the raw amino-acid sequence, 361 residues long: tRNA/tmRNA (uracil-C(5))-methyltransferase (361 aa).

Residues glutamine 185, tyrosine 213, asparagine 218, glutamate 234, and aspartate 294 each coordinate S-adenosyl-L-methionine. Cysteine 319 functions as the Nucleophile in the catalytic mechanism. The Proton acceptor role is filled by glutamate 353.

This sequence belongs to the class I-like SAM-binding methyltransferase superfamily. RNA M5U methyltransferase family. TrmA subfamily.

The catalysed reaction is uridine(54) in tRNA + S-adenosyl-L-methionine = 5-methyluridine(54) in tRNA + S-adenosyl-L-homocysteine + H(+). The enzyme catalyses uridine(341) in tmRNA + S-adenosyl-L-methionine = 5-methyluridine(341) in tmRNA + S-adenosyl-L-homocysteine + H(+). Dual-specificity methyltransferase that catalyzes the formation of 5-methyluridine at position 54 (m5U54) in all tRNAs, and that of position 341 (m5U341) in tmRNA (transfer-mRNA). In Pseudomonas syringae pv. syringae (strain B728a), this protein is tRNA/tmRNA (uracil-C(5))-methyltransferase.